The sequence spans 116 residues: Acyl-CoA-binding protein homolog 3 (116 aa).

In terms of domain architecture, ACB spans 3 to 92 (LQEKFDAAVE…LNDMFDKIAE (90 aa)). An acyl-CoA is bound by residues 34–38 (YSLFK), K60, and Y79.

This sequence belongs to the ACBP family.

Binds medium- and long-chain acyl-CoA esters with very high affinity and may function as an intracellular carrier of acyl-CoA esters. The polypeptide is Acyl-CoA-binding protein homolog 3 (acbp-3) (Caenorhabditis elegans).